The following is a 485-amino-acid chain: Sulfated surface glycoprotein 185 (485 aa).

A signal peptide spans 1–20 (MSKLLLVALFGAIAVVATSA). An N-linked (GlcNAc...) asparagine glycan is attached at Asn193. The disordered stretch occupies residues 212–317 (LSGPNVNPIG…PPVPPPPSPP (106 aa)). Composition is skewed to pro residues over residues 221 to 234 (GPAP…PSPQ) and 241 to 317 (PPSP…PSPP). Asn347 carries N-linked (GlcNAc...) asparagine glycosylation.

Polymer. Intersubunit cross-links are formed between saccharide chains rather than between polypeptide chains. In terms of processing, hydroxylated on proline residues in the Pro-rich central domain. Post-translationally, glycosylated; contains sulfate-substituted glycans.

Functionally, the extracellular matrix (ECM) of Volvox contains insoluble fibrous layers that surround individual cells at a distance to form contiguous cellular compartments. SSG 185 is the monomeric precursor of this substructure (C3Z structure). This is Sulfated surface glycoprotein 185 from Volvox carteri (Green alga).